Here is a 558-residue protein sequence, read N- to C-terminus: Potassium-transporting ATPase potassium-binding subunit (558 aa).

The next 12 helical transmembrane spans lie at M1 to L21, F66 to L86, M127 to A147, I166 to M186, I245 to L265, A281 to W301, F327 to V347, L354 to G374, V377 to V397, I416 to M436, I482 to I502, and I531 to I551.

It belongs to the KdpA family. In terms of assembly, the system is composed of three essential subunits: KdpA, KdpB and KdpC.

Its subcellular location is the cell membrane. Functionally, part of the high-affinity ATP-driven potassium transport (or Kdp) system, which catalyzes the hydrolysis of ATP coupled with the electrogenic transport of potassium into the cytoplasm. This subunit binds the extracellular potassium ions and delivers the ions to the membrane domain of KdpB through an intramembrane tunnel. In Staphylococcus aureus (strain MSSA476), this protein is Potassium-transporting ATPase potassium-binding subunit.